We begin with the raw amino-acid sequence, 336 residues long: Alcohol dehydrogenase (336 aa).

Cys-37, His-58, Cys-89, Cys-92, Cys-95, Cys-103, and Cys-145 together coordinate Zn(2+).

The protein belongs to the zinc-containing alcohol dehydrogenase family. It depends on Zn(2+) as a cofactor.

The catalysed reaction is a primary alcohol + NAD(+) = an aldehyde + NADH + H(+). It carries out the reaction a secondary alcohol + NAD(+) = a ketone + NADH + H(+). This chain is Alcohol dehydrogenase (adh), found in Staphylococcus aureus (strain Mu50 / ATCC 700699).